The sequence spans 131 residues: uncharacterized protein (131 aa).

The interval 60–100 (GRHTLSQVPNKGHEKASAVQLPEKQGTDQSRRGPTSAVTKA) is disordered. A compositionally biased stretch (polar residues) spans 91–100 (RGPTSAVTKA).

This is an uncharacterized protein from Homo sapiens (Human).